A 222-amino-acid polypeptide reads, in one-letter code: Putative O-methyltransferase MAP_2558 (222 aa).

Residues valine 49, glutamate 71, 73-74 (GT), serine 79, aspartate 97, and isoleucine 98 contribute to the S-adenosyl-L-methionine site. Aspartate 145 contributes to the substrate binding site. Aspartate 147 contributes to the S-adenosyl-L-methionine binding site.

The protein belongs to the class I-like SAM-binding methyltransferase superfamily. Cation-dependent O-methyltransferase family.

The polypeptide is Putative O-methyltransferase MAP_2558 (Mycolicibacterium paratuberculosis (strain ATCC BAA-968 / K-10) (Mycobacterium paratuberculosis)).